The primary structure comprises 228 residues: Cytidylate kinase (228 aa).

12–20 is an ATP binding site; sequence GPSGSGKGT.

This sequence belongs to the cytidylate kinase family. Type 1 subfamily.

It is found in the cytoplasm. It carries out the reaction CMP + ATP = CDP + ADP. The enzyme catalyses dCMP + ATP = dCDP + ADP. The sequence is that of Cytidylate kinase from Pseudomonas entomophila (strain L48).